The primary structure comprises 154 residues: Iron sulfur cluster assembly protein 1, mitochondrial (154 aa).

Belongs to the NifU family. In terms of assembly, component of the core Fe-S cluster (ISC) assembly machinery. [2Fe-2S] cluster is required as a cofactor.

The protein resides in the mitochondrion matrix. Its pathway is cofactor biosynthesis; iron-sulfur cluster biosynthesis. Functionally, scaffold protein for the de novo synthesis of iron-sulfur (Fe-S) clusters within mitochondria, which is required for maturation of both mitochondrial and cytoplasmic [2Fe-2S] and [4Fe-4S] proteins. First, a [2Fe-2S] cluster is transiently assembled on the scaffold protein ISU1. In a second step, the cluster is released from ISU1, transferred to a glutaredoxin, followed by the formation of mitochondrial [2Fe-2S] proteins, the synthesis of [4Fe-4S] clusters and their target-specific insertion into the recipient apoproteins. Cluster assembly on ISU1 depends on the function of the cysteine desulfurase complex NFS1-ISD11, which serves as the sulfur donor for cluster synthesis, the iron-binding protein frataxin as the putative iron donor, and the electron transfer chain comprised of ferredoxin reductase and ferredoxin, which receive their electrons from NADH. In Eremothecium gossypii (strain ATCC 10895 / CBS 109.51 / FGSC 9923 / NRRL Y-1056) (Yeast), this protein is Iron sulfur cluster assembly protein 1, mitochondrial (ISU1).